The chain runs to 605 residues: MEDVEARFAHLLQPIRDLTKNWEVDVAAQLGEYLEELDQICISFDEGKTTMNFIEAALLIQGSACVYSKKVEYLYSLVYQALDFISGKRRAKQLSSVQEDRANGVASSGVPQEAENEFLSLDDFPDSRTNVDLKNDQTPSEVLIIPLLPMALVAPDEMEKNNNPLYSRQGEVLASRKDFRMNTCVPHPRGAFMLEPEGMSPMEPAGVSPMPGTQKDTGRTEEQPMEVSVCRSPVPALGFSQEPGPSPEGPMPLGGGEDEDAEEAVELPEASAPKAALEPKESRSPQQSAALPRRYMLREREGAPEPASCVKETPDPWQSLDPFDSLESKPFKKGRPYSVPPCVEEALGQKRKRKGAAKLQDFHQWYLAAYADHADSRRLRRKGPSFADMEVLYWTHVKEQLETLRKLQRREVAEQWLRPAEEDHLEDSLEDLGAADDFLEPEEYMEPEGADPREAADLDAVPMSLSYEELVRRNVELFIATSQKFVQETELSQRIRDWEDTVQPLLQEQEQHVPFDIHTYGDQLVSRFPQLNEWCPFAELVAGQPAFEVCRSMLASLQLANDYTVEITQQPGLEMAVDTMSLRLLTHQRAHKRFQTYAAPSMAQP.

Thr-19 is modified (phosphothreonine). A phosphoserine mark is found at Ser-95, Ser-200, Ser-208, Ser-228, and Ser-232. A disordered region spans residues 194-331 (LEPEGMSPME…PFDSLESKPF (138 aa)). The segment covering 256 to 266 (GEDEDAEEAVE) has biased composition (acidic residues). A phosphoserine mark is found at Ser-282, Ser-284, Ser-466, and Ser-492.

It belongs to the CND2 H2 (condensin-2 subunit 2) family. In terms of assembly, component of the condensin-2 complex, which contains the SMC2 and SMC4 heterodimer, and three non SMC subunits, NCAPG2, NCAPH2 and NCAPD3 that probably regulate the complex.

The protein localises to the nucleus. It localises to the chromosome. In terms of biological role, regulatory subunit of the condensin-2 complex, a complex that seems to provide chromosomes with an additional level of organization and rigidity and in establishing mitotic chromosome architecture. May promote the resolution of double-strand DNA catenanes (intertwines) between sister chromatids. Condensin-mediated compaction likely increases tension in catenated sister chromatids, providing directionality for type II topoisomerase-mediated strand exchanges toward chromatid decatenation. Required for decatenation of chromatin bridges at anaphase. Early in neurogenesis, may play an essential role to ensure accurate mitotic chromosome condensation in neuron stem cells, ultimately affecting neuron pool and cortex size. Seems to have lineage-specific role in T-cell development. The chain is Condensin-2 complex subunit H2 (NCAPH2) from Homo sapiens (Human).